The primary structure comprises 153 residues: MNVGTAHSEVNPNTRVMNSRGIWLSYVLAIGLLHVVLLSIPFVSVPVVWTLTNLIHNLGMYIFLHTVKGTPFETPDQGKARLLTHWEQMDYGVQFTASRKFLTITPIVLYFLTSFYTKYDQVHFILNTVSLMSVLIPKLPQLHGVRIFGINKY.

Residues 1–17 (MNVGTAHSEVNPNTRVM) are important for ceramide level-sensing. Topologically, residues 1–21 (MNVGTAHSEVNPNTRVMNSRG) are cytoplasmic. 2 consecutive transmembrane segments (helical) span residues 22-42 (IWLS…SIPF) and 43-63 (VSVP…MYIF). The Cytoplasmic segment spans residues 64–94 (LHTVKGTPFETPDQGKARLLTHWEQMDYGVQ). Residues 95 to 117 (FTASRKFLTITPIVLYFLTSFYT) traverse the membrane as a helical segment. At 118-121 (KYDQ) the chain is on the extracellular side. Residues 122–142 (VHFILNTVSLMSVLIPKLPQL) form a helical membrane-spanning segment. Pro-137 bears the Hydroxyproline mark. Residues 143–153 (HGVRIFGINKY) are Cytoplasmic-facing.

The protein belongs to the ORM family. As to quaternary structure, ceramide-sensitive subunit of the serine palmitoyltransferase (SPT) complex, which is also composed of SPTLC1, SPTLC2/3 and SPTSSA/B. Post-translationally, when hydroxylated at Pro-137, ubiquitinated via 'Lys-48'-linkage, leading to proteasomal degradation. In endothelial cells, ORMDL3 proteasomal degradation is controlled by the sphingosine 1-phosphate receptor signaling pathway.

The protein localises to the endoplasmic reticulum membrane. Functionally, plays an essential role in the homeostatic regulation of sphingolipid de novo biosynthesis by modulating the activity of the serine palmitoyltransferase (SPT) in response to ceramide levels. When complexed to SPT, the binding of ceramides to its N-terminus stabilizes a conformation that block SPT substrate entry, hence preventing SPT catalytic activity. Through this mechanism, maintains ceramide levels at sufficient concentrations for the production of complex sphingolipids, but which prevents the accumulation of ceramides to levels that trigger apoptosis. The protein is ORM1-like protein 3 (Ormdl3) of Rattus norvegicus (Rat).